Here is a 418-residue protein sequence, read N- to C-terminus: Serine--tRNA ligase (418 aa).

Position 232-234 (Thr-232–Glu-234) interacts with L-serine. Residues Arg-263–Glu-265 and Val-279 contribute to the ATP site. Residue Glu-286 coordinates L-serine. An ATP-binding site is contributed by Glu-350–Ser-353. Ser-385 is an L-serine binding site.

Belongs to the class-II aminoacyl-tRNA synthetase family. Type-1 seryl-tRNA synthetase subfamily. Homodimer. The tRNA molecule binds across the dimer.

The protein resides in the cytoplasm. The enzyme catalyses tRNA(Ser) + L-serine + ATP = L-seryl-tRNA(Ser) + AMP + diphosphate + H(+). The catalysed reaction is tRNA(Sec) + L-serine + ATP = L-seryl-tRNA(Sec) + AMP + diphosphate + H(+). It participates in aminoacyl-tRNA biosynthesis; selenocysteinyl-tRNA(Sec) biosynthesis; L-seryl-tRNA(Sec) from L-serine and tRNA(Sec): step 1/1. Its function is as follows. Catalyzes the attachment of serine to tRNA(Ser). Is also able to aminoacylate tRNA(Sec) with serine, to form the misacylated tRNA L-seryl-tRNA(Sec), which will be further converted into selenocysteinyl-tRNA(Sec). This chain is Serine--tRNA ligase, found in Leptospira biflexa serovar Patoc (strain Patoc 1 / Ames).